We begin with the raw amino-acid sequence, 21 residues long: uncharacterized protein (21 aa).

This is an uncharacterized protein from Dictyostelium discoideum (Social amoeba).